Reading from the N-terminus, the 347-residue chain is 4-hydroxyproline 2-epimerase (347 aa).

Gln-85 provides a ligand contact to substrate. Residue Ser-93 is the Proton acceptor of the active site. Substrate-binding positions include 94 to 95 and Asp-251; that span reads GS. Residue Cys-255 is the Proton donor of the active site. A substrate-binding site is contributed by 256-257; it reads GT.

It belongs to the proline racemase family.

It carries out the reaction trans-4-hydroxy-L-proline = cis-4-hydroxy-D-proline. Functionally, catalyzes the epimerization of trans-4-hydroxy-L-proline (t4LHyp) to cis-4-hydroxy-D-proline (c4DHyp). May be involved in a degradation pathway of t4LHyp. Can also catalyze the epimerization of trans-3-hydroxy-L-proline (t3LHyp) to cis-3-hydroxy-D-proline (c3DHyp) in vitro. Displays no proline racemase activity. The protein is 4-hydroxyproline 2-epimerase of Allorhizobium ampelinum (strain ATCC BAA-846 / DSM 112012 / S4) (Agrobacterium vitis (strain S4)).